The chain runs to 307 residues: Elongation factor Ts (307 aa).

An involved in Mg(2+) ion dislocation from EF-Tu region spans residues 80–83 (TDFV).

It belongs to the EF-Ts family.

It localises to the cytoplasm. Associates with the EF-Tu.GDP complex and induces the exchange of GDP to GTP. It remains bound to the aminoacyl-tRNA.EF-Tu.GTP complex up to the GTP hydrolysis stage on the ribosome. The protein is Elongation factor Ts of Nitrobacter hamburgensis (strain DSM 10229 / NCIMB 13809 / X14).